The chain runs to 308 residues: Polyprenyl-phosphate transporter (308 aa).

8 helical membrane-spanning segments follow: residues 15–35 (GLAM…IAFI), 69–89 (INGL…ATLA), 91–111 (LISW…FGLI), 130–150 (LLWL…KPLH), 163–183 (AIAI…LLLI), 200–220 (ILLI…HILS), 228–248 (DVTL…IWPW), and 282–302 (PSQW…VLGL).

The protein belongs to the PopT family.

The protein localises to the cell inner membrane. Its activity is regulated as follows. Active in alkaline conditions. Its function is as follows. Flippase that catalyzes the transport of undecaprenyl phosphate (UndP) across the cytoplasmic membrane, from the external side to the cytoplasmic side. Is involved in UndP recycling during peptidoglycan synthesis. Required for cell shape maintenance at alkaline pH and peptidoglycan maintenance. Required by the cholera pathogen for growth and cell shape maintenance in the intestine. The sequence is that of Polyprenyl-phosphate transporter from Vibrio cholerae serotype O1 (strain ATCC 39315 / El Tor Inaba N16961).